Here is a 139-residue protein sequence, read N- to C-terminus: Transcription initiation factor IIA small chain homolog (139 aa).

Residues 113–139 (LSAQGPSKRVNRAHAAAAGDDEDDDSD) form a disordered region.

Belongs to the TFIIA subunit 2 family.

The protein localises to the nucleus. This Caenorhabditis elegans protein is Transcription initiation factor IIA small chain homolog.